Here is a 392-residue protein sequence, read N- to C-terminus: Probable protein phosphatase 2C 29 (392 aa).

The PPM-type phosphatase domain occupies 44–353; the sequence is DYSVAVAQAN…DDITVVVLFL (310 aa). 4 residues coordinate Mn(2+): D75, G76, D285, and D344. A disordered region spans residues 360–392; that stretch reads AGRGDEIDGTDGPVDVFSLSPDDREDPTRPVLR.

The protein belongs to the PP2C family. Mg(2+) is required as a cofactor. Requires Mn(2+) as cofactor.

The enzyme catalyses O-phospho-L-seryl-[protein] + H2O = L-seryl-[protein] + phosphate. It carries out the reaction O-phospho-L-threonyl-[protein] + H2O = L-threonyl-[protein] + phosphate. This chain is Probable protein phosphatase 2C 29, found in Oryza sativa subsp. japonica (Rice).